The chain runs to 123 residues: Small ribosomal subunit protein uS12 (123 aa).

Residues 10-20 (KGRKKVKKKKT) show a composition bias toward basic residues. A disordered region spans residues 10-32 (KGRKKVKKKKTAPALQGSPQKRG). A 3-methylthioaspartic acid modification is found at D89.

It belongs to the universal ribosomal protein uS12 family. As to quaternary structure, part of the 30S ribosomal subunit. Contacts proteins S8 and S17. May interact with IF1 in the 30S initiation complex.

Functionally, with S4 and S5 plays an important role in translational accuracy. Its function is as follows. Interacts with and stabilizes bases of the 16S rRNA that are involved in tRNA selection in the A site and with the mRNA backbone. Located at the interface of the 30S and 50S subunits, it traverses the body of the 30S subunit contacting proteins on the other side and probably holding the rRNA structure together. The combined cluster of proteins S8, S12 and S17 appears to hold together the shoulder and platform of the 30S subunit. This Halothermothrix orenii (strain H 168 / OCM 544 / DSM 9562) protein is Small ribosomal subunit protein uS12.